The following is a 352-amino-acid chain: uncharacterized protein (352 aa).

The N-terminal 55 residues, 1-55, are a transit peptide targeting the chloroplast; that stretch reads MAMAALTSSSSAITLLNKPFLPNRSSFFSSDSQSPLLRFSASTSVRSRFPSAAIS.

This sequence belongs to the methyltransferase superfamily.

It localises to the plastid. The protein resides in the chloroplast. The protein localises to the plastoglobule. This is an uncharacterized protein from Arabidopsis thaliana (Mouse-ear cress).